Consider the following 823-residue polypeptide: MRRLQQSLRRRSARRCPFILIPHRLLTTSYASYKPAPQATLEIEDTNSPTFLLKTSPIQLPARATSDDSAIKAHFDLPHSIFGDMVGVRREHVKGLFHYDSLTQPESLMRLTDRTLIQASAIVQRIVVAPQDPTGRELRLVVKNLDRLSDILCGVIDMCELIRNVHPHQDWVNQSDRTHQILCSFMNELNATRGLYESLAKAIAHPFNDPLTTSELRVARIFLTDFERSGIHLPPSVRERFVKHSDALLFLGRSFLSSASSGPSTVPHIEIPDPHRLLTGLGRQFVDSLPRTGRNGQAVIEPGSWEAQMILRYAREGRARELVYVGGMRADKKRISVLEAMLKERAELASVLGKNNWAEVVLVDKMTKTPENVMRFLTSLAQHHQPVARAEVDMLRRMKATALTGNYFDPRNSRTRHLPLFHAWDRDYYSDKYLTSLIPTGSPPSISPYLSTGTVMSGLSRIFSRLYGISFKPAVVSPGEVWHPSVRRLDVVHEEEGLIGVIYCDFFSRIGKSSGAAHYTVRCSRRVDDDDIDGDGLPEDWDKPYGPGLEADKESLSGKPGKYQLPIIALSMDVGTVNEGRPALLNWQELETLFHEMGHAIHSMIGRTEYHNVSGTRCATDFVELPSILMEHFVSSPEVLSTLAFHHATGEPLPIPVIEAHLALNQSLSALETHGQIAMALLDQKYHTLRHGQDSFDSTAIWFQLQQEIGVIQPVPGTAWQMQFGHLYGYGATYYSYLFDRAIAGKIWSTLFHRSGTSQAYDRKAEGILSREGGELLKEKVLKWGGGRDPWEMVGDVIGGVEGDELSKGDERALALVGSWSVV.

The N-terminal 33 residues, 1-33, are a transit peptide targeting the mitochondrion; that stretch reads MRRLQQSLRRRSARRCPFILIPHRLLTTSYASY. Positions 532–553 are disordered; that stretch reads IDGDGLPEDWDKPYGPGLEADK. Residue histidine 595 participates in Zn(2+) binding. Residue glutamate 596 is part of the active site. Residues histidine 599 and histidine 602 each contribute to the Zn(2+) site.

Belongs to the peptidase M3 family. Zn(2+) serves as cofactor.

The protein localises to the mitochondrion matrix. The enzyme catalyses Release of an N-terminal octapeptide as second stage of processing of some proteins imported into the mitochondrion.. Cleaves proteins, imported into the mitochondrion, to their mature size. While most mitochondrial precursor proteins are processed to the mature form in one step by mitochondrial processing peptidase (MPP), the sequential cleavage by MIP of an octapeptide after initial processing by MPP is a required step for a subgroup of nuclear-encoded precursor proteins destined for the matrix or the inner membrane. This is Mitochondrial intermediate peptidase 2 (OCT2) from Cryptococcus neoformans var. neoformans serotype D (strain B-3501A) (Filobasidiella neoformans).